Reading from the N-terminus, the 716-residue chain is Fatty acid oxidation complex subunit alpha (716 aa).

Residues 1–189 (MIYQSPTIQV…KVGAVDAVVA (189 aa)) form an enoyl-CoA hydratase/isomerase region. Asp296 lines the substrate pocket. The interval 311–716 (KEVKNAAVLG…ATNNGSYYQA (406 aa)) is 3-hydroxyacyl-CoA dehydrogenase. Residues Met324, Asp343, 400–402 (VVE), Lys407, and Ser429 each bind NAD(+). The For 3-hydroxyacyl-CoA dehydrogenase activity role is filled by His450. Asn453 serves as a coordination point for NAD(+). Asn500 and Tyr660 together coordinate substrate.

This sequence in the N-terminal section; belongs to the enoyl-CoA hydratase/isomerase family. It in the C-terminal section; belongs to the 3-hydroxyacyl-CoA dehydrogenase family. Heterotetramer of two alpha chains (FadB) and two beta chains (FadA).

It catalyses the reaction a (3S)-3-hydroxyacyl-CoA + NAD(+) = a 3-oxoacyl-CoA + NADH + H(+). The enzyme catalyses a (3S)-3-hydroxyacyl-CoA = a (2E)-enoyl-CoA + H2O. The catalysed reaction is a 4-saturated-(3S)-3-hydroxyacyl-CoA = a (3E)-enoyl-CoA + H2O. It carries out the reaction (3S)-3-hydroxybutanoyl-CoA = (3R)-3-hydroxybutanoyl-CoA. It catalyses the reaction a (3Z)-enoyl-CoA = a 4-saturated (2E)-enoyl-CoA. The enzyme catalyses a (3E)-enoyl-CoA = a 4-saturated (2E)-enoyl-CoA. It participates in lipid metabolism; fatty acid beta-oxidation. Functionally, involved in the aerobic and anaerobic degradation of long-chain fatty acids via beta-oxidation cycle. Catalyzes the formation of 3-oxoacyl-CoA from enoyl-CoA via L-3-hydroxyacyl-CoA. It can also use D-3-hydroxyacyl-CoA and cis-3-enoyl-CoA as substrate. The protein is Fatty acid oxidation complex subunit alpha of Shewanella putrefaciens (strain CN-32 / ATCC BAA-453).